The sequence spans 358 residues: 3-isopropylmalate dehydrogenase (358 aa).

77-90 (GPKWTNLPPDQQPE) contacts NAD(+). Residues Arg98, Arg108, Arg137, and Asp226 each coordinate substrate. 3 residues coordinate Mg(2+): Asp226, Asp250, and Asp254. 284–296 (GSAPDIAGKGIAN) contributes to the NAD(+) binding site.

It belongs to the isocitrate and isopropylmalate dehydrogenases family. LeuB type 1 subfamily. In terms of assembly, homodimer. Requires Mg(2+) as cofactor. The cofactor is Mn(2+).

It is found in the cytoplasm. The catalysed reaction is (2R,3S)-3-isopropylmalate + NAD(+) = 4-methyl-2-oxopentanoate + CO2 + NADH. The protein operates within amino-acid biosynthesis; L-leucine biosynthesis; L-leucine from 3-methyl-2-oxobutanoate: step 3/4. Its function is as follows. Catalyzes the oxidation of 3-carboxy-2-hydroxy-4-methylpentanoate (3-isopropylmalate) to 3-carboxy-4-methyl-2-oxopentanoate. The product decarboxylates to 4-methyl-2 oxopentanoate. This is 3-isopropylmalate dehydrogenase from Haemophilus influenzae (strain 86-028NP).